The sequence spans 526 residues: Probable DNA ligase (526 aa).

Glu228 is an ATP binding site. The active-site N6-AMP-lysine intermediate is the Lys230. Arg235, Arg250, Glu279, Phe319, Arg391, and Lys397 together coordinate ATP.

Belongs to the ATP-dependent DNA ligase family. It depends on Mg(2+) as a cofactor.

The enzyme catalyses ATP + (deoxyribonucleotide)n-3'-hydroxyl + 5'-phospho-(deoxyribonucleotide)m = (deoxyribonucleotide)n+m + AMP + diphosphate.. In terms of biological role, DNA ligase that seals nicks in double-stranded DNA during DNA replication, DNA recombination and DNA repair. The protein is Probable DNA ligase of Mycobacterium avium (strain 104).